The primary structure comprises 97 residues: MTKITKEEVNKVANLARLELNENEINNHAEQLEKILDYIRQLEKIDTDDVPCTTRAIEVVNVFRKDENKNSDCNEEILELGPSREDKYFKVPKIINE.

The protein belongs to the GatC family. In terms of assembly, heterotrimer of A, B and C subunits.

The catalysed reaction is L-glutamyl-tRNA(Gln) + L-glutamine + ATP + H2O = L-glutaminyl-tRNA(Gln) + L-glutamate + ADP + phosphate + H(+). It carries out the reaction L-aspartyl-tRNA(Asn) + L-glutamine + ATP + H2O = L-asparaginyl-tRNA(Asn) + L-glutamate + ADP + phosphate + 2 H(+). Functionally, allows the formation of correctly charged Asn-tRNA(Asn) or Gln-tRNA(Gln) through the transamidation of misacylated Asp-tRNA(Asn) or Glu-tRNA(Gln) in organisms which lack either or both of asparaginyl-tRNA or glutaminyl-tRNA synthetases. The reaction takes place in the presence of glutamine and ATP through an activated phospho-Asp-tRNA(Asn) or phospho-Glu-tRNA(Gln). This Prochlorococcus marinus (strain MIT 9301) protein is Aspartyl/glutamyl-tRNA(Asn/Gln) amidotransferase subunit C.